The sequence spans 195 residues: UPF0314 protein RHE_CH03951 (195 aa).

A run of 4 helical transmembrane segments spans residues Ala-14–Met-34, Trp-64–Leu-84, Asp-128–Ala-148, and Ala-150–Ile-170.

It belongs to the UPF0314 family.

It is found in the cell membrane. The sequence is that of UPF0314 protein RHE_CH03951 from Rhizobium etli (strain ATCC 51251 / DSM 11541 / JCM 21823 / NBRC 15573 / CFN 42).